The primary structure comprises 64 residues: Palmitoyl-CoA hydrolase (64 aa).

The protein belongs to the type-B carboxylesterase/lipase family. Monomer and homotrimer.

The protein resides in the microsome. Its subcellular location is the endoplasmic reticulum. The enzyme catalyses hexadecanoyl-CoA + H2O = hexadecanoate + CoA + H(+). In terms of biological role, hydrolysis of a variety of CoA thioesters of long-chain fatty acids. In Rattus norvegicus (Rat), this protein is Palmitoyl-CoA hydrolase.